Reading from the N-terminus, the 130-residue chain is uncharacterized protein (130 aa).

The 55-residue stretch at 19 to 73 (IYSLRLAKGLSRQQLAEVIDVTHQQLQKYEKAINRISVGRLVLIAEALDRNIDYF) folds into the HTH cro/C1-type domain. A DNA-binding region (H-T-H motif) is located at residues 30 to 49 (RQQLAEVIDVTHQQLQKYEK).

This is an uncharacterized protein from Rickettsia prowazekii (strain Madrid E).